The chain runs to 546 residues: Crossover junction endonuclease EME1A (546 aa).

Disordered regions lie at residues 1-55 (MSDF…FLDE) and 88-232 (VISL…REKQ). A compositionally biased stretch (polar residues) spans 28–49 (PTDLNLDTEPSLQKQPPGSAST). Composition is skewed to basic and acidic residues over residues 103–120 (SSKK…KPCR) and 149–167 (DAIE…VEKM). Positions 173–183 (TITSKSTSLSA) are enriched in polar residues. A coiled-coil region spans residues 188–245 (KKKMSKDEKTRAAEEKKLQKEQEKLQKAASKAEDAEHKKLEREKQKWAKEKDKALKCI). Basic and acidic residues predominate over residues 192 to 232 (SKDEKTRAAEEKKLQKEQEKLQKAASKAEDAEHKKLEREKQ). In terms of domain architecture, ERCC4 spans 278–478 (NPIQRSIVWT…PSLKSLLKVY (201 aa)).

The protein belongs to the EME1/MMS4 family. As to quaternary structure, forms a heterodimer with MUS81. Mg(2+) serves as cofactor. The cofactor is Ca(2+).

The protein resides in the nucleus. Interacts with MUS81 to form a DNA structure-specific endonuclease with substrate preference for branched DNA structures with a 5'-end at the branch nick. Typical substrates include 3'-flap structures, D-loops, replication forks, nicked Holliday junctions and also intact Holliday junctions with a reduced efficiency. May be required in mitosis for the processing of stalled or collapsed replication fork intermediates. Plays a role in DNA repair and in genotoxic stress-induced homologous recombination (HR) in somatic cells. Mediates a subset of meiotic recombination events that are insensitive to crossover interference. The protein is Crossover junction endonuclease EME1A (EME1A) of Arabidopsis thaliana (Mouse-ear cress).